Reading from the N-terminus, the 528-residue chain is Major facilitator superfamily multidrug transporter mdr3 (528 aa).

The interval 1–37 (MLAMAASAEETNRQSNAGRRSVISPSEAPPEAEQSDV) is disordered. 7 consecutive transmembrane segments (helical) span residues 50 to 70 (FILI…YILI), 91 to 111 (WHVG…GKLG), 119 to 139 (ILVL…CSAF), 149 to 169 (ARAL…AIAG), 180 to 200 (MIFS…GVVG), 211 to 231 (WVMW…LWVI), and 241 to 261 (AATL…LLLL). A glycan (N-linked (GlcNAc...) asparagine) is linked at asparagine 262. The next 5 membrane-spanning stretches (helical) occupy residues 272 to 292 (GWST…LGLF), 340 to 360 (VITS…GCIL), 375 to 395 (FWSF…STTI), 410 to 430 (SLVN…AGTV), and 448 to 468 (ALWS…VFAV).

It belongs to the major facilitator superfamily.

The protein localises to the cell membrane. Functionally, major facilitator superfamily transporter that confers resistance to azoles such as itraconazole. In Aspergillus fumigatus (strain ATCC MYA-4609 / CBS 101355 / FGSC A1100 / Af293) (Neosartorya fumigata), this protein is Major facilitator superfamily multidrug transporter mdr3.